A 405-amino-acid chain; its full sequence is Coiled-coil domain-containing protein 91 (405 aa).

The interval 1–16 (MDDDDFGGFEAAETFD) is GGA1-binding motif. The tract at residues 1-27 (MDDDDFGGFEAAETFDGGNGETQTTSP) is disordered. A phosphoserine mark is found at serine 43 and serine 46. A coiled-coil region spans residues 126–376 (GANVSNIQLR…QKRLDQVIRQ (251 aa)). A homodimerization region spans residues 210–377 (LSIIVDEYKH…KRLDQVIRQR (168 aa)).

As to quaternary structure, homodimer. Interacts with GGA1, GGA2 and AP1G1.

The protein resides in the membrane. It localises to the golgi apparatus. It is found in the trans-Golgi network membrane. The protein localises to the trans-Golgi network. Its function is as follows. Involved in the regulation of membrane traffic through the trans-Golgi network (TGN). Functions in close cooperation with the GGAs in the sorting of hydrolases to lysosomes. This chain is Coiled-coil domain-containing protein 91 (CCDC91), found in Pongo abelii (Sumatran orangutan).